A 182-amino-acid polypeptide reads, in one-letter code: Lipid A acyltransferase PagP (182 aa).

The first 21 residues, 1 to 21 (MTQYFRALAFFLLLVPATAMA), serve as a signal peptide directing secretion. Cys-22 carries the N-palmitoyl cysteine lipid modification. The S-diacylglycerol cysteine moiety is linked to residue Cys-22. Residues His-55, Asp-98, and Ser-99 contribute to the active site.

Belongs to the lipid A palmitoyltransferase family. Homodimer.

The protein resides in the cell outer membrane. It catalyses the reaction a lipid A + a 1,2-diacyl-sn-glycero-3-phosphocholine = a hepta-acyl lipid A + a 2-acyl-sn-glycero-3-phosphocholine. The catalysed reaction is a lipid IVA + a 1,2-diacyl-sn-glycero-3-phosphocholine = a lipid IVB + a 2-acyl-sn-glycero-3-phosphocholine. It carries out the reaction a lipid IIA + a 1,2-diacyl-sn-glycero-3-phosphocholine = a lipid IIB + a 2-acyl-sn-glycero-3-phosphocholine. Functionally, transfers a fatty acid residue from the sn-1 position of a phospholipid to the N-linked hydroxyfatty acid chain on the proximal unit of lipid A or its precursors. Required for resistance to cationic antimicrobial peptides (CAMPs). Modifications of lipid A with an acyl chain to evade host immune defenses by resisting antibody-mediated complement lysis during respiratory infection. The sequence is that of Lipid A acyltransferase PagP from Bordetella bronchiseptica (strain ATCC BAA-588 / NCTC 13252 / RB50) (Alcaligenes bronchisepticus).